The primary structure comprises 39 residues: Cytochrome b6-f complex subunit 5 (39 aa).

Residues 5-25 (LLSGIVLGLVPVTILGLFVTA) traverse the membrane as a helical segment.

It belongs to the PetG family. In terms of assembly, the 4 large subunits of the cytochrome b6-f complex are cytochrome b6, subunit IV (17 kDa polypeptide, PetD), cytochrome f and the Rieske protein, while the 4 small subunits are PetG, PetL, PetM and PetN. The complex functions as a dimer.

It is found in the plastid. The protein localises to the chloroplast thylakoid membrane. Functionally, component of the cytochrome b6-f complex, which mediates electron transfer between photosystem II (PSII) and photosystem I (PSI), cyclic electron flow around PSI, and state transitions. PetG is required for either the stability or assembly of the cytochrome b6-f complex. This Pleurastrum terricola (Filamentous green alga) protein is Cytochrome b6-f complex subunit 5.